A 599-amino-acid chain; its full sequence is Estrogen receptor (599 aa).

The interval 1–188 is modulating (transactivation AF-1); mediates interaction with MACROD1; the sequence is MTMTLHTKAS…IMESAKETRY (188 aa). An O-linked (GlcNAc) serine glycan is attached at serine 10. A required for interaction with NCOA1 region spans residues 35 to 47; sequence MERALGEVYVDNS. An interaction with DDX5; self-association region spans residues 35–178; it reads MERALGEVYV…LSSSNEKGNM (144 aa). The O-linked (GlcNAc) threonine glycan is linked to threonine 50. 2 positions are modified to phosphoserine; by CDK2: serine 108 and serine 110. Serine 122 is modified (phosphoserine). A disordered region spans residues 147-175; it reads DTGPPAFYRSNSDNRRQNGRERLSSSNEK. Basic and acidic residues predominate over residues 158 to 169; it reads SDNRRQNGRERL. The residue at position 171 (serine 171) is a Phosphoserine; by CK2. NR C4-type zinc fingers lie at residues 189–209 and 225–249; these read CAVCNDYASGYHYGVWSCEGC and CPATNQCTIDKNRRKSCQACRLRKC. Residues 189-254 constitute a DNA-binding region (nuclear receptor); the sequence is CAVCNDYASG…RLRKCYEVGM (66 aa). A mediates interaction with DNTTIP2 region spans residues 189-314; the sequence is CAVCNDYASG…TKKNSPALSL (126 aa). Residues 255–314 are hinge; the sequence is MKGGIRKDRRGGRMLKHKRQRDDLEGRNEMGASGDMRAANLWPSPLVIKHTKKNSPALSL. Arginine 264 carries the post-translational modification Asymmetric dimethylarginine; by PRMT1. The interval 266–599 is interaction with AKAP13; the sequence is GRMLKHKRQR…PEAEGFPNTI (334 aa). A self-association region spans residues 268–599; the sequence is MLKHKRQRDD…PEAEGFPNTI (332 aa). The NR LBD domain maps to 315 to 551; that stretch reads TADQMVSALL…DLLLEMLDAH (237 aa). The segment at 315 to 599 is transactivation AF-2; sequence TADQMVSALL…PEAEGFPNTI (285 aa). Residues glutamate 357 and arginine 398 each coordinate 17beta-estradiol. The S-palmitoyl cysteine moiety is linked to residue cysteine 451. Histidine 528 lines the 17beta-estradiol pocket. Position 541 is a phosphotyrosine; by Tyr-kinases (tyrosine 541). The segment at 557–581 is disordered; the sequence is ASRMGVPPEEPSQTQLATTSSTSAH. Over residues 568 to 581 the composition is skewed to low complexity; the sequence is SQTQLATTSSTSAH. Threonine 575 is a glycosylation site (O-linked (GlcNAc) threonine).

This sequence belongs to the nuclear hormone receptor family. NR3 subfamily. In terms of assembly, interacts with BCAS3. Binds DNA as a homodimer. Can form a heterodimer with ESR2. Interacts with coactivator NCOA5. Interacts with PELP1, the interaction is enhanced by 17-beta-estradiol; the interaction increases ESR1 transcriptional activity. Interacts with NCOA7; the interaction is ligand-inducible. Interacts with AKAP13, CUEDC2, HEXIM1, KDM5A, MAP1S, SMARD1, and UBE1C. Interacts with MUC1; the interaction is stimulated by 7 beta-estradiol (E2) and enhances ESR1-mediated transcription. Interacts with DNTTIP2, and UIMC1. Interacts with KMT2D/MLL2. Interacts with ATAD2; the interaction is enhanced by estradiol. Interacts with KIF18A and LDB1. Interacts with RLIM (via its C-terminus). Interacts with MACROD1. Interacts with SH2D4A and PLCG. Interacts with SH2D4A; the interaction blocks binding to PLCG and inhibits estrogen-induced cell proliferation. Interacts with DYNLL1. Interacts with CCDC62; the interaction requires estradiol and appears to enhance the transcription of target genes. Interacts with NR2C1; the interaction prevents homodimerization of ESR1 and suppresses its transcriptional activity and cell growth. Interacts with DNAAF4. Interacts with PRMT2. Interacts with RBFOX2. Interacts with EP300; the interaction is estrogen-dependent and enhanced by CITED1. Interacts with CITED1; the interaction is estrogen-dependent. Interacts with FAM120B, FOXL2, PHB2 and SLC30A9. Interacts with coactivators NCOA3 and NCOA6. Interacts with STK3/MST2 only in the presence of SAV1 and vice-versa. Binds to CSNK1D. Interacts with NCOA2; NCOA2 can interact with ESR1 AF-1 and AF-2 domains simultaneously and mediate their transcriptional synergy. Interacts with DDX5. Interacts with NCOA1; the interaction seems to require a self-association of N-terminal and C-terminal regions. Interacts with ZNF366, DDX17, NFKB1, RELA, SP1 and SP3. Interacts with NRIP1. Interacts with GPER1; the interaction occurs in an estrogen-dependent manner. Interacts with CLOCK and the interaction is stimulated by estrogen. Interacts with BCAS3. Interacts with TRIP4 (ufmylated); estrogen dependent. Interacts with LMTK3; the interaction phosphorylates ESR1 (in vitro) and protects it against proteasomal degradation. Interacts with CCAR2 (via N-terminus) in a ligand-independent manner. Interacts with ZFHX3. Interacts with SFR1 in a ligand-dependent and -independent manner. Interacts with DCAF13, LATS1 and DCAF1; regulates ESR1 ubiquitination and ubiquitin-mediated proteasomal degradation. Interacts (via DNA-binding domain) with POU4F2 isoform 2 (C-terminus); this interaction increases the estrogen receptor ESR1 transcriptional activity in a DNA- and ligand 17-beta-estradiol-independent manner. Interacts with ESRRB isoform 1. Interacts with UBE3A and WBP2. Interacts with GTF2B. Interacts with RBM39. In the absence of hormonal ligand, interacts with TACC1. Interacts with PI3KR1 or PI3KR2 and PTK2/FAK1. Interacts with SRC. Interacts with BAG1; the interaction is promoted in the absence of estradiol (17-beta-estradiol/E2). Interacts with and ubiquitinated by STUB1; the interaction is promoted in the absence of estradiol (17-beta-estradiol/E2). Interacts with NEDD8. Post-translationally, phosphorylated by cyclin A/CDK2 and CK1. Phosphorylation probably enhances transcriptional activity. Dephosphorylation at Ser-122 by PPP5C inhibits its transactivation activity. Phosphorylated by LMTK3 (in vitro). Ubiquitinated. Deubiquitinated by OTUB1. In terms of processing, palmitoylated at Cys-451 by ZDHHC7 and ZDHHC21. This modification is required for plasma membrane targeting and for rapid intracellular signaling via ERK and AKT kinases and cAMP generation, but not for signaling mediated by the nuclear hormone receptor. Post-translationally, ubiquitinated; regulated by LATS1 via DCAF1 it leads to ESR1 proteasomal degradation. Deubiquitinated by OTUB1. Ubiquitinated by STUB1/CHIP; in the CA1 hippocampal region following loss of endogenous circulating estradiol (17-beta-estradiol/E2). Ubiquitinated by UBR5, leading to its degradation: UBR5 specifically recognizes and binds ligand-bound ESR1 when it is not associated with coactivators (NCOAs). In presence of NCOAs, the UBR5-degron is not accessible, preventing its ubiquitination and degradation. Dimethylated by PRMT1 at Arg-264. The methylation may favor cytoplasmic localization. Demethylated by JMJD6 at Arg-264.

Its subcellular location is the nucleus. The protein localises to the cytoplasm. The protein resides in the golgi apparatus. It localises to the cell membrane. Its function is as follows. Nuclear hormone receptor. The steroid hormones and their receptors are involved in the regulation of eukaryotic gene expression and affect cellular proliferation and differentiation in target tissues. Ligand-dependent nuclear transactivation involves either direct homodimer binding to a palindromic estrogen response element (ERE) sequence or association with other DNA-binding transcription factors, such as AP-1/c-Jun, c-Fos, ATF-2, Sp1 and Sp3, to mediate ERE-independent signaling. Ligand binding induces a conformational change allowing subsequent or combinatorial association with multiprotein coactivator complexes through LXXLL motifs of their respective components. Mutual transrepression occurs between the estrogen receptor (ER) and NF-kappa-B in a cell-type specific manner. Decreases NF-kappa-B DNA-binding activity and inhibits NF-kappa-B-mediated transcription from the IL6 promoter and displace RELA/p65 and associated coregulators from the promoter. Recruited to the NF-kappa-B response element of the CCL2 and IL8 promoters and can displace CREBBP. Present with NF-kappa-B components RELA/p65 and NFKB1/p50 on ERE sequences. Can also act synergistically with NF-kappa-B to activate transcription involving respective recruitment adjacent response elements; the function involves CREBBP. Can activate the transcriptional activity of TFF1. Also mediates membrane-initiated estrogen signaling involving various kinase cascades. Essential for MTA1-mediated transcriptional regulation of BRCA1 and BCAS3. Maintains neuronal survival in response to ischemic reperfusion injury when in the presence of circulating estradiol (17-beta-estradiol/E2). This chain is Estrogen receptor (Esr1), found in Mus musculus (Mouse).